Consider the following 152-residue polypeptide: MRAEKRWHILLSMILLLITSSQCMDSKEVKESERKTLLNLILQVIGEKPASRRVTSGLYSVSQDAKFSSRENTAHLPKPDNSRPIEIVPRDTSMKDKFIEHFTAGPVKFPSECRTHFHRIYHNTRDCSRPTYYKRCARLLTRLAMSPLCTQS.

The signal sequence occupies residues 1 to 23; sequence MRAEKRWHILLSMILLLITSSQC. 2 disulfides stabilise this stretch: cysteine 113–cysteine 149 and cysteine 127–cysteine 136.

It belongs to the ALKAL family. As to expression, expressed at low level in the notochord and iridophore stripes, the eye and the swim bladder.

It is found in the secreted. It localises to the cell membrane. Its function is as follows. Cytokine that acts as a physiological ligand for receptor tyrosine kinases LTK and ALK. Required for iridophore development in the adult eye by acting as a receptor for LTK. The sequence is that of ALK and LTK ligand 1 from Danio rerio (Zebrafish).